The sequence spans 234 residues: (5-formylfuran-3-yl)methyl phosphate synthase (234 aa).

The Schiff-base intermediate with substrate role is filled by K27. The active-site Proton acceptor is the K85.

The protein belongs to the MfnB family.

The catalysed reaction is 2 D-glyceraldehyde 3-phosphate = 4-(hydroxymethyl)-2-furancarboxaldehyde phosphate + phosphate + 2 H2O. It functions in the pathway cofactor biosynthesis; methanofuran biosynthesis. Functionally, catalyzes the formation of 4-(hydroxymethyl)-2-furancarboxaldehyde phosphate (4-HFC-P) from two molecules of glyceraldehyde-3-P (GA-3-P). This chain is (5-formylfuran-3-yl)methyl phosphate synthase, found in Methanosarcina mazei (strain ATCC BAA-159 / DSM 3647 / Goe1 / Go1 / JCM 11833 / OCM 88) (Methanosarcina frisia).